A 706-amino-acid chain; its full sequence is Probable rhamnogalacturonate lyase B (706 aa).

The first 19 residues, 1 to 19, serve as a signal peptide directing secretion; sequence MRLLHPLIPASLLLTLTSA. Residues Asn-27, Asn-40, Asn-143, Asn-239, Asn-285, Asn-380, Asn-495, Asn-569, Asn-597, and Asn-638 are each glycosylated (N-linked (GlcNAc...) asparagine).

It belongs to the polysaccharide lyase 4 family.

It localises to the secreted. It catalyses the reaction Endotype eliminative cleavage of L-alpha-rhamnopyranosyl-(1-&gt;4)-alpha-D-galactopyranosyluronic acid bonds of rhamnogalacturonan I domains in ramified hairy regions of pectin leaving L-rhamnopyranose at the reducing end and 4-deoxy-4,5-unsaturated D-galactopyranosyluronic acid at the non-reducing end.. Functionally, pectinolytic enzymes consist of four classes of enzymes: pectin lyase, polygalacturonase, pectin methylesterase and rhamnogalacturonase. Degrades the rhamnogalacturonan I (RG-I) backbone of pectin. The sequence is that of Probable rhamnogalacturonate lyase B (rglB) from Aspergillus niger (strain ATCC MYA-4892 / CBS 513.88 / FGSC A1513).